The sequence spans 483 residues: S-adenosylhomocysteine hydrolase-like protein 1 (483 aa).

The tract at residues 1 to 56 is disordered; sequence MQEFTKFPTKTGRRSLSRSISQSSTDSYSSAASYTDSSDDEVSPREKQQTNSKGSS. The span at 17-36 shows a compositional bias: low complexity; it reads SRSISQSSTDSYSSAASYTD. Residues 18–45 are PEST; sequence RSISQSSTDSYSSAASYTDSSDDEVSPR. A Phosphoserine; by PKD modification is found at serine 21. A phosphoserine mark is found at serine 24, serine 27, serine 30, and serine 37. Residues 91-154 are interaction with BCL2L10; the sequence is QGEKPLAGAK…EAGVAVFAWK (64 aa). Positions 108, 182, 207, 237, and 241 each coordinate substrate. An NAD binding region spans residues 234–401; sequence SVTKQKFDNL…EGRLLNLSCS (168 aa). NAD(+) is bound by residues 271-275, glutamate 294, and asparagine 329; that span reads GYGEV. Position 344 is a phosphoserine (serine 344). NAD(+) is bound at residue 350 to 352; sequence MGH. The PDZ-binding stretch occupies residues 473–483; the sequence is NGPFKPNYYRY.

This sequence belongs to the adenosylhomocysteinase family. Forms multimers. Forms heteromultimers with AHCYL2 (via the C-terminal region). Interacts (when phosphorylated) with ITPR1 (when not phosphorylated); the interaction suppresses inositol 1,4,5-trisphosphate binding to ITPR1. Interacts with BCL2L10; this strengthens the interaction of AHCYL1 with ITPR1. Interacts with CFTR and SLC26A6; the interactions take place once AHCYL1 is released from ITPR1 and increase CFTR and SLC26A6 activities. Interacts with RRM1; in a phosphorylation- and (dATP)-dependent manner. Interacts (via PEST domain when phosphorylated) with SLC4A4 isoform 1 but not isoform 2; the interaction increases SLC4A4 isoform 1 activity. Interacts (when phosphorylated) with SLC9A3; the interaction is required for SLC9A3 apical location and activity. Interacts (when phosphorylated) with FIP1L1; the interaction is direct and associates AHCYL1 with the CPSF complex and RNA. Interacts with PAPOLA. Interacts with ZCCHC4. Interacts with AHCY. It depends on NAD(+) as a cofactor. In terms of processing, phosphorylated at Ser/Thr residues between Ser-21 and Thr-25 in the PEST region: required for interaction with dATP-bound RRM1 and ITPR1. Phosphorylation at Ser-21 by PRKD1 and CAMK4 is required for further phosphorylations by CSNK1A1. Phosphorylation is induced by oxidative stress. Probably phosphorylated by CAMK2A; phosphorylation at Ser-21 may be required for interaction with SLC9A3. Dephosphorylated in response to apoptotic stress conditions which causes translocation of both AHCYL1 and BCL2L10 from mitochondria-associated endoplasmic reticulum membranes and promotes apoptosis. In terms of tissue distribution, expressed in kidney proximal tubules and outer medulla (at protein level).

The protein localises to the endoplasmic reticulum. The protein resides in the cytoplasm. It is found in the cytosol. It localises to the apical cell membrane. Its subcellular location is the microsome. Multifaceted cellular regulator which coordinates several essential cellular functions including regulation of epithelial HCO3(-) and fluid secretion, mRNA processing and DNA replication. Regulates ITPR1 sensitivity to inositol 1,4,5-trisphosphate, competing for the common binding site and acting as endogenous 'pseudoligand' whose inhibitory activity can be modulated by its phosphorylation status. Promotes the formation of contact points between the endoplasmic reticulum (ER) and mitochondria, facilitating transfer of Ca(2+) from the ER to mitochondria. Under normal cellular conditions, functions cooperatively with BCL2L10 to limit ITPR1-mediated Ca(2+) release but, under apoptotic stress conditions, dephosphorylated which promotes dissociation of both AHCYL1 and BCL2L10 from mitochondria-associated endoplasmic reticulum membranes, inhibits BCL2L10 interaction with ITPR1 and leads to increased Ca(2+) transfer to mitochondria which promotes apoptosis. In the pancreatic and salivary ducts, at resting state, attenuates inositol 1,4,5-trisphosphate-induced calcium release by interacting with ITPR1. When extracellular stimuli induce ITPR1 phosphorylation or inositol 1,4,5-trisphosphate production, dissociates from ITPR1 to interact with CFTR and SLC26A6, mediating their synergistic activation by calcium and cAMP that stimulates the epithelial secretion of electrolytes and fluid. Also activates basolateral SLC4A4 isoform 1 to coordinate fluid and HCO3(-) secretion. Inhibits the effect of STK39 on SLC4A4 and CFTR by recruiting PP1 phosphatase which activates SLC4A4, SLC26A6 and CFTR through dephosphorylation. Mediates the induction of SLC9A3 surface expression produced by Angiotensin-2. Depending on the cell type, activates SLC9A3 in response to calcium or reverses SLC9A3R2-dependent calcium inhibition. May modulate the polyadenylation state of specific mRNAs, both by controlling the subcellular location of FIP1L1 and by inhibiting PAPOLA activity, in response to a stimulus that alters its phosphorylation state. Acts as a (dATP)-dependent inhibitor of ribonucleotide reductase large subunit RRM1, controlling the endogenous dNTP pool and ensuring normal cell cycle progression. In vitro does not exhibit any S-adenosyl-L-homocysteine hydrolase activity. This chain is S-adenosylhomocysteine hydrolase-like protein 1, found in Rattus norvegicus (Rat).